The primary structure comprises 471 residues: Putative multidrug resistance protein MdtD (471 aa).

Residues 1-11 lie on the Periplasmic side of the membrane; the sequence is MTDLPDSTRWQ. The chain crosses the membrane as a helical span at residues 12–32; sequence LWIVAFGFFMQSLDTTIVNTA. The Cytoplasmic segment spans residues 33 to 48; the sequence is LPSMAQSLGESPLHMH. The helical transmembrane segment at 49–69 threads the bilayer; it reads MVIVSYVLTVAVMLPASGWLA. Over 70–76 the chain is Periplasmic; it reads DKVGVRN. A helical transmembrane segment spans residues 77-97; sequence IFFTAIVLFTLGSLFCALSGT. Residues 98–101 are Cytoplasmic-facing; it reads LNEL. Residues 102–124 form a helical membrane-spanning segment; the sequence is LLARALQGVGGAMMVPVGRLTVM. Residues 125-137 are Periplasmic-facing; sequence KIVPREQYMAAMT. The helical transmembrane segment at 138-158 threads the bilayer; sequence FVTLPGQVGPLLGPALGGLLV. Over 159 to 164 the chain is Cytoplasmic; sequence EYASWH. The chain crosses the membrane as a helical span at residues 165-185; it reads WIFLINIPVGIIGAIATLLLM. Topologically, residues 186 to 196 are periplasmic; it reads PNYTMQTWRFD. The helical transmembrane segment at 197-217 threads the bilayer; it reads LSGFLLLAVGMAVLTLALDGS. At 218 to 224 the chain is on the cytoplasmic side; that stretch reads KGTGLSP. A helical membrane pass occupies residues 225 to 245; sequence LAIAGLVAVGVVALVLYLLHA. Topologically, residues 246–262 are periplasmic; sequence RNNNRALFSLKLFRTRT. Residues 263-283 form a helical membrane-spanning segment; sequence FSLGLAGSFAGRIGSGMLPFM. Residues 284–285 lie on the Cytoplasmic side of the membrane; it reads TP. A helical membrane pass occupies residues 286-306; it reads VFLQIGLGFSPFHAGLMMIPM. The Periplasmic portion of the chain corresponds to 307-341; it reads VLGSMGMKRIVVQVVNRFGYRRVLVATTLGLSLVT. A helical transmembrane segment spans residues 342–362; the sequence is LLFMTTALLGWYYVLPFVLFL. Topologically, residues 363-395 are cytoplasmic; that stretch reads QGMVNSTRFSSMNTLTLKDLPDNLASSGNSLLS. Residues 396 to 416 form a helical membrane-spanning segment; that stretch reads MIMQLSMSIGVTIAGLLLGLF. Over 417–430 the chain is Periplasmic; the sequence is GSQHVSVDSGTTQT. The chain crosses the membrane as a helical span at residues 431–451; sequence VFMYTWLSMALIIALPAFIFA. At 452-471 the chain is on the cytoplasmic side; it reads RVPNDTHQNVAISRRKRSAQ.

This sequence belongs to the major facilitator superfamily. TCR/Tet family.

It localises to the cell inner membrane. The chain is Putative multidrug resistance protein MdtD from Shigella boydii serotype 4 (strain Sb227).